Consider the following 642-residue polypeptide: 1-deoxy-D-xylulose-5-phosphate synthase 2 (642 aa).

Thiamine diphosphate-binding positions include His73 and 113 to 115 (SHA). Position 144 (Asp144) interacts with Mg(2+). Residues 145-146 (GA), Asn174, Tyr285, and Glu366 each bind thiamine diphosphate. Residue Asn174 participates in Mg(2+) binding.

It belongs to the transketolase family. DXPS subfamily. Homodimer. Mg(2+) serves as cofactor. It depends on thiamine diphosphate as a cofactor.

It catalyses the reaction D-glyceraldehyde 3-phosphate + pyruvate + H(+) = 1-deoxy-D-xylulose 5-phosphate + CO2. It functions in the pathway metabolic intermediate biosynthesis; 1-deoxy-D-xylulose 5-phosphate biosynthesis; 1-deoxy-D-xylulose 5-phosphate from D-glyceraldehyde 3-phosphate and pyruvate: step 1/1. Its function is as follows. Catalyzes the acyloin condensation reaction between C atoms 2 and 3 of pyruvate and glyceraldehyde 3-phosphate to yield 1-deoxy-D-xylulose-5-phosphate (DXP). The protein is 1-deoxy-D-xylulose-5-phosphate synthase 2 of Streptomyces coelicolor (strain ATCC BAA-471 / A3(2) / M145).